Reading from the N-terminus, the 463-residue chain is A-type ATP synthase subunit B (463 aa).

Belongs to the ATPase alpha/beta chains family. In terms of assembly, has multiple subunits with at least A(3), B(3), C, D, E, F, H, I and proteolipid K(x).

The protein resides in the cell membrane. In terms of biological role, component of the A-type ATP synthase that produces ATP from ADP in the presence of a proton gradient across the membrane. The B chain is a regulatory subunit. The protein is A-type ATP synthase subunit B of Aeropyrum pernix (strain ATCC 700893 / DSM 11879 / JCM 9820 / NBRC 100138 / K1).